The sequence spans 668 residues: 1-deoxy-D-xylulose-5-phosphate synthase (668 aa).

Residues His105 and 146-148 (AHS) each bind thiamine diphosphate. Asp177 provides a ligand contact to Mg(2+). Thiamine diphosphate-binding positions include 178 to 179 (GA), Asn206, Tyr316, and Glu398. Position 206 (Asn206) interacts with Mg(2+).

This sequence belongs to the transketolase family. DXPS subfamily. In terms of assembly, homodimer. The cofactor is Mg(2+). Requires thiamine diphosphate as cofactor.

It carries out the reaction D-glyceraldehyde 3-phosphate + pyruvate + H(+) = 1-deoxy-D-xylulose 5-phosphate + CO2. Its pathway is metabolic intermediate biosynthesis; 1-deoxy-D-xylulose 5-phosphate biosynthesis; 1-deoxy-D-xylulose 5-phosphate from D-glyceraldehyde 3-phosphate and pyruvate: step 1/1. In terms of biological role, catalyzes the acyloin condensation reaction between C atoms 2 and 3 of pyruvate and glyceraldehyde 3-phosphate to yield 1-deoxy-D-xylulose-5-phosphate (DXP). The polypeptide is 1-deoxy-D-xylulose-5-phosphate synthase (Nitrobacter hamburgensis (strain DSM 10229 / NCIMB 13809 / X14)).